The following is a 704-amino-acid chain: Ion-translocating oxidoreductase complex subunit C (704 aa).

4Fe-4S ferredoxin-type domains lie at 368 to 397 (MGAP…QQLY) and 407 to 436 (KATA…VQYF). [4Fe-4S] cluster is bound by residues Cys377, Cys380, Cys383, Cys387, Cys416, Cys419, Cys422, and Cys426. A disordered region spans residues 536–685 (RAKQAAHPMA…ADPRKAAVAA (150 aa)). A compositionally biased stretch (low complexity) spans 556–565 (KAAVEAAIAR).

The protein belongs to the 4Fe4S bacterial-type ferredoxin family. RnfC subfamily. As to quaternary structure, the complex is composed of six subunits: RsxA, RsxB, RsxC, RsxD, RsxE and RsxG. The cofactor is [4Fe-4S] cluster.

The protein resides in the cell inner membrane. Part of a membrane-bound complex that couples electron transfer with translocation of ions across the membrane. Required to maintain the reduced state of SoxR. In Salmonella dublin (strain CT_02021853), this protein is Ion-translocating oxidoreductase complex subunit C.